The primary structure comprises 443 residues: Glutamyl-tRNA reductase (443 aa).

Residues 49 to 52, Ser109, 114 to 116, and Gln120 contribute to the substrate site; these read TCNR and ETQ. The Nucleophile role is filled by Cys50. 189 to 194 is an NADP(+) binding site; it reads GAGKMG.

The protein belongs to the glutamyl-tRNA reductase family. In terms of assembly, homodimer.

The catalysed reaction is (S)-4-amino-5-oxopentanoate + tRNA(Glu) + NADP(+) = L-glutamyl-tRNA(Glu) + NADPH + H(+). It functions in the pathway porphyrin-containing compound metabolism; protoporphyrin-IX biosynthesis; 5-aminolevulinate from L-glutamyl-tRNA(Glu): step 1/2. In terms of biological role, catalyzes the NADPH-dependent reduction of glutamyl-tRNA(Glu) to glutamate 1-semialdehyde (GSA). This chain is Glutamyl-tRNA reductase, found in Bacillus mycoides (strain KBAB4) (Bacillus weihenstephanensis).